Consider the following 380-residue polypeptide: Peptide chain release factor 1-like, mitochondrial (380 aa).

A mitochondrion-targeting transit peptide spans 1–26 (MRSRVLWGAARWLWPRRAVGPARRPL). Residues 63–117 (ELLAVIKLLNEKERELRETEHLLHDENEDLRKLAENEITLCQKEITQLKHQIILL) are a coiled coil. Positions 236–300 (PKDLRIDTKR…LRAKLYSMHL (65 aa)) are GGQ domain. The GGQ motif lies at 250 to 252 (GGQ). Gln-252 is subject to N5-methylglutamine.

The protein belongs to the prokaryotic/mitochondrial release factor family. Methylation of glutamine in the GGQ triplet by HEMK1 is conserved from bacteria to mammals. As to expression, expressed in skeletal muscle (at protein level).

The protein resides in the mitochondrion. In terms of biological role, mitochondrial peptide chain release factor that directs the termination of translation in response to the peptide chain termination codons UAA and UAG. This Homo sapiens (Human) protein is Peptide chain release factor 1-like, mitochondrial.